The primary structure comprises 403 residues: Protein-export membrane protein SecD (403 aa).

The next 6 membrane-spanning stretches (helical) occupy residues 13-33 (LLVI…KGVN), 245-265 (FLKM…VIIA), 285-305 (VVFL…PALA), 306-326 (GIIL…DEIV), 347-367 (VVLA…VAGM), and 368-388 (GLLK…VVIT).

It belongs to the SecD/SecF family. SecD subfamily. In terms of assembly, part of the protein translocation apparatus. Forms a complex with SecF.

It localises to the cell membrane. Its function is as follows. Involved in protein export. The protein is Protein-export membrane protein SecD of Methanopyrus kandleri (strain AV19 / DSM 6324 / JCM 9639 / NBRC 100938).